The primary structure comprises 205 residues: Urease accessory protein UreG (205 aa).

Residue 10 to 17 (GPVGAGKT) participates in GTP binding.

This sequence belongs to the SIMIBI class G3E GTPase family. UreG subfamily. In terms of assembly, homodimer. UreD, UreF and UreG form a complex that acts as a GTP-hydrolysis-dependent molecular chaperone, activating the urease apoprotein by helping to assemble the nickel containing metallocenter of UreC. The UreE protein probably delivers the nickel.

Its subcellular location is the cytoplasm. Its function is as follows. Facilitates the functional incorporation of the urease nickel metallocenter. This process requires GTP hydrolysis, probably effectuated by UreG. The chain is Urease accessory protein UreG from Corynebacterium glutamicum (strain R).